We begin with the raw amino-acid sequence, 159 residues long: MNIRRKNRLWIACAVLAGLALTIGLVLYALRSNIDLFYTPGEILYGKRETQQMPEVGQRLRVGGMVMLGSVQRDPNSLKVTFTIYDAEGSVDVSYEGILPDLFREGQGVVVQGELEKGNHILAKEVLAKHDENYTPPEVEKAMEANHRRPASVYKDPAS.

At 1 to 8 the chain is on the cytoplasmic side; the sequence is MNIRRKNR. The helical; Signal-anchor for type II membrane protein transmembrane segment at 9–29 threads the bilayer; it reads LWIACAVLAGLALTIGLVLYA. Topologically, residues 30–159 are periplasmic; the sequence is LRSNIDLFYT…PASVYKDPAS (130 aa). Heme contacts are provided by H130 and Y134. A compositionally biased stretch (basic and acidic residues) spans 132-147; the sequence is ENYTPPEVEKAMEANH. Residues 132–159 are disordered; the sequence is ENYTPPEVEKAMEANHRRPASVYKDPAS.

It belongs to the CcmE/CycJ family.

It is found in the cell inner membrane. Its function is as follows. Heme chaperone required for the biogenesis of c-type cytochromes. Transiently binds heme delivered by CcmC and transfers the heme to apo-cytochromes in a process facilitated by CcmF and CcmH. This is Cytochrome c-type biogenesis protein CcmE from Shigella sonnei (strain Ss046).